Consider the following 142-residue polypeptide: General odorant-binding protein 99a (142 aa).

The first 16 residues, 1 to 16, serve as a signal peptide directing secretion; that stretch reads MKVFVAICVLIGLASA. 3 cysteine pairs are disulfide-bonded: Cys33/Cys64, Cys60/Cys116, and Cys105/Cys125.

Belongs to the PBP/GOBP family. Expressed in larval chemosensory organ. Specifically expressed exclusively in a subset of chemosensory sensilla on the third antennal segment.

It is found in the secreted. Present in the aqueous fluid surrounding olfactory sensory dendrites and are thought to aid in the capture and transport of hydrophobic odorants into and through this fluid. In Drosophila melanogaster (Fruit fly), this protein is General odorant-binding protein 99a (Obp99a).